Here is a 463-residue protein sequence, read N- to C-terminus: uncharacterized protein (463 aa).

Positions 13–81 (IPLYQQLYRY…PRSGWFADYH (69 aa)) constitute an HTH gntR-type domain. The segment at residues 41–60 (KRLLANQLSISQTTVERAYE) is a DNA-binding region (H-T-H motif). Lys308 bears the N6-(pyridoxal phosphate)lysine mark.

The protein in the C-terminal section; belongs to the class-I pyridoxal-phosphate-dependent aminotransferase family. Requires pyridoxal 5'-phosphate as cofactor.

This is an uncharacterized protein from Bacillus subtilis (strain 168).